The primary structure comprises 66 residues: MALRTRLGEILRPLNAEYGKVVPGWGTTPIMGLTMVLFLVFLLIILQIYNSSLIIENVDVDWANAI.

Residues 29-49 (PIMGLTMVLFLVFLLIILQIY) traverse the membrane as a helical segment.

Belongs to the PsbH family. PSII is composed of 1 copy each of membrane proteins PsbA, PsbB, PsbC, PsbD, PsbE, PsbF, PsbH, PsbI, PsbJ, PsbK, PsbL, PsbM, PsbT, PsbX, PsbY, PsbZ, Psb30/Ycf12, at least 3 peripheral proteins of the oxygen-evolving complex and a large number of cofactors. It forms dimeric complexes.

The protein localises to the plastid. The protein resides in the chloroplast thylakoid membrane. One of the components of the core complex of photosystem II (PSII), required for its stability and/or assembly. PSII is a light-driven water:plastoquinone oxidoreductase that uses light energy to abstract electrons from H(2)O, generating O(2) and a proton gradient subsequently used for ATP formation. It consists of a core antenna complex that captures photons, and an electron transfer chain that converts photonic excitation into a charge separation. In Thalassiosira pseudonana (Marine diatom), this protein is Photosystem II reaction center protein H.